The following is a 183-amino-acid chain: TATA-box-binding protein (183 aa).

2 tandem repeats follow at residues 8–84 (VENI…VDKI) and 99–175 (IQNI…KERL).

It belongs to the TBP family.

General factor that plays a role in the activation of archaeal genes transcribed by RNA polymerase. Binds specifically to the TATA box promoter element which lies close to the position of transcription initiation. In Methanosphaera stadtmanae (strain ATCC 43021 / DSM 3091 / JCM 11832 / MCB-3), this protein is TATA-box-binding protein.